Consider the following 217-residue polypeptide: Pyridoxine/pyridoxamine 5'-phosphate oxidase (217 aa).

Substrate contacts are provided by residues 14-17 (RKSY) and Lys-72. Residues 67-72 (RVVLIK), 82-83 (YT), Arg-88, and Lys-89 each bind FMN. Positions 129, 133, and 137 each coordinate substrate. FMN contacts are provided by residues 146-147 (QS) and Trp-190. 196–198 (RLH) serves as a coordination point for substrate. Arg-200 contacts FMN.

It belongs to the pyridoxamine 5'-phosphate oxidase family. As to quaternary structure, homodimer. FMN serves as cofactor.

It catalyses the reaction pyridoxamine 5'-phosphate + O2 + H2O = pyridoxal 5'-phosphate + H2O2 + NH4(+). The enzyme catalyses pyridoxine 5'-phosphate + O2 = pyridoxal 5'-phosphate + H2O2. It participates in cofactor metabolism; pyridoxal 5'-phosphate salvage; pyridoxal 5'-phosphate from pyridoxamine 5'-phosphate: step 1/1. The protein operates within cofactor metabolism; pyridoxal 5'-phosphate salvage; pyridoxal 5'-phosphate from pyridoxine 5'-phosphate: step 1/1. In terms of biological role, catalyzes the oxidation of either pyridoxine 5'-phosphate (PNP) or pyridoxamine 5'-phosphate (PMP) into pyridoxal 5'-phosphate (PLP). The protein is Pyridoxine/pyridoxamine 5'-phosphate oxidase of Acidovorax sp. (strain JS42).